Reading from the N-terminus, the 356-residue chain is 3-dehydroquinate synthase (356 aa).

NAD(+)-binding positions include 106 to 110 (GVVGD), 130 to 131 (TT), Lys-143, and Lys-152. Glu-185, His-248, and His-265 together coordinate Zn(2+).

This sequence belongs to the sugar phosphate cyclases superfamily. Dehydroquinate synthase family. NAD(+) is required as a cofactor. Requires Co(2+) as cofactor. The cofactor is Zn(2+).

It is found in the cytoplasm. The enzyme catalyses 7-phospho-2-dehydro-3-deoxy-D-arabino-heptonate = 3-dehydroquinate + phosphate. It functions in the pathway metabolic intermediate biosynthesis; chorismate biosynthesis; chorismate from D-erythrose 4-phosphate and phosphoenolpyruvate: step 2/7. Its function is as follows. Catalyzes the conversion of 3-deoxy-D-arabino-heptulosonate 7-phosphate (DAHP) to dehydroquinate (DHQ). The chain is 3-dehydroquinate synthase from Caldanaerobacter subterraneus subsp. tengcongensis (strain DSM 15242 / JCM 11007 / NBRC 100824 / MB4) (Thermoanaerobacter tengcongensis).